The primary structure comprises 141 residues: Large ribosomal subunit protein uL11 (141 aa).

The protein belongs to the universal ribosomal protein uL11 family. In terms of assembly, part of the ribosomal stalk of the 50S ribosomal subunit. Interacts with L10 and the large rRNA to form the base of the stalk. L10 forms an elongated spine to which L12 dimers bind in a sequential fashion forming a multimeric L10(L12)X complex. Post-translationally, one or more lysine residues are methylated.

Forms part of the ribosomal stalk which helps the ribosome interact with GTP-bound translation factors. This Lactobacillus johnsonii (strain CNCM I-12250 / La1 / NCC 533) protein is Large ribosomal subunit protein uL11.